Here is a 485-residue protein sequence, read N- to C-terminus: NADH-quinone oxidoreductase subunit N (485 aa).

14 consecutive transmembrane segments (helical) span residues 8–28, 35–55, 75–95, 105–125, 127–147, 159–179, 203–223, 235–255, 271–291, 297–317, 326–346, 373–393, 408–427, and 449–469; these read LIAL…MLSI, FVNA…LYFV, FYTG…YPWL, FYLL…ASHL, SLFI…GYAF, YTIL…LVYA, LLAG…LVPF, PAPV…GVLM, TVLG…AISQ, LLGY…IAVQ, VGVY…VVSL, AAVM…LGFI, WWLT…YYLR, and AFTA…VLGI.

The protein belongs to the complex I subunit 2 family. NDH-1 is composed of 13 different subunits. Subunits NuoA, H, J, K, L, M, N constitute the membrane sector of the complex.

The protein resides in the cell inner membrane. It carries out the reaction a quinone + NADH + 5 H(+)(in) = a quinol + NAD(+) + 4 H(+)(out). NDH-1 shuttles electrons from NADH, via FMN and iron-sulfur (Fe-S) centers, to quinones in the respiratory chain. The immediate electron acceptor for the enzyme in this species is believed to be ubiquinone. Couples the redox reaction to proton translocation (for every two electrons transferred, four hydrogen ions are translocated across the cytoplasmic membrane), and thus conserves the redox energy in a proton gradient. This Erwinia tasmaniensis (strain DSM 17950 / CFBP 7177 / CIP 109463 / NCPPB 4357 / Et1/99) protein is NADH-quinone oxidoreductase subunit N.